We begin with the raw amino-acid sequence, 240 residues long: Uridylate kinase (240 aa).

12–15 provides a ligand contact to ATP; sequence KLSG. Residues 20–25 form an involved in allosteric activation by GTP region; sequence GEQGNG. G54 is a UMP binding site. Residues G55 and R59 each contribute to the ATP site. UMP contacts are provided by residues D74 and 135 to 142; that span reads TGNPYFST. N163, Y169, and D172 together coordinate ATP.

Belongs to the UMP kinase family. As to quaternary structure, homohexamer.

The protein resides in the cytoplasm. The enzyme catalyses UMP + ATP = UDP + ADP. It participates in pyrimidine metabolism; CTP biosynthesis via de novo pathway; UDP from UMP (UMPK route): step 1/1. With respect to regulation, allosterically activated by GTP. Inhibited by UTP. Functionally, catalyzes the reversible phosphorylation of UMP to UDP. This Bacillus velezensis (strain DSM 23117 / BGSC 10A6 / LMG 26770 / FZB42) (Bacillus amyloliquefaciens subsp. plantarum) protein is Uridylate kinase.